Here is a 392-residue protein sequence, read N- to C-terminus: Sex-determining region Y protein (392 aa).

The segment at H4–K81 is sufficient for interaction with KPNB1. Residues V5 to K73 constitute a DNA-binding region (HMG box). Required for nuclear localization stretches follow at residues K6 to K22 and Q75 to K81. Residues R52 to Q84 form a sufficient for interaction with EP300 region. K81 carries the N6-acetyllysine modification. Residues A92–Q144 form a necessary for interaction with ZNF208 isoform KRAB-O region. Residues A94–I138 are necessary for interaction with SLC9A3R2 and nuclear accumulation of SLC9A3R2. Positions H142 to Q361 are disordered. The segment covering Q144–Q181 has biased composition (low complexity). Basic and acidic residues-rich tracts occupy residues F182–Q197 and Q210–Q228. Positions Q229–Q238 are enriched in low complexity. 3 stretches are compositionally biased toward basic and acidic residues: residues F239–H250, F261–P295, and Q313–Q349. A compositionally biased stretch (low complexity) spans Q350–Q361.

This sequence belongs to the SRY family. In terms of assembly, interacts with KPNB1, ZNF208 isoform KRAB-O, PARP1 and SLC9A3R2. The interaction with KPNB1 is sensitive to dissociation by Ran in the GTP-bound form. Interaction with PARP1 impaired its DNA-binding activity. Interacts with CALM, EP300, HDAC3 and WT1. The interaction with EP300 modulates its DNA-binding activity. Post-translationally, degraded due to the presence of a degron at the C-terminus that promotes its degradation. In terms of processing, phosphorylated on serine residues by PKA. Phosphorylation by PKA enhances its DNA-binding activity and stimulates transcription repression. Acetylation of Lys-81 contributes to its nuclear localization and enhances its interaction with KPNB1. Post-translationally, poly-ADP-ribosylated by PARP1. ADP-ribosylation reduces its DNA-binding activity. In terms of tissue distribution, expressed in gonadal somatic pre-Sertoli cells. Expressed in the substantia nigra of the brain (at protein level). Expressed in diencephalon, cortex, the substantia nigra of the midbrain and the medial mammillary bodies of the hypothalamus of male, but not female. Expressed in gonadal somatic pre-Sertoli cells. While it is expressed at lower level compared to isoform Sry-S, this form is more stable and constitutes the predominant protein product of the Sry locus in XY gonads (at protein level).

The protein localises to the nucleus speckle. It is found in the cytoplasm. The protein resides in the nucleus. Its function is as follows. Transcriptional regulator that controls a genetic switch in male development. It is necessary and sufficient for initiating male sex determination by directing the development of supporting cell precursors (pre-Sertoli cells) as Sertoli rather than granulosa cells. Involved in different aspects of gene regulation including promoter activation or repression. Binds to the DNA consensus sequence 5'-[AT]AACAA[AT]-3'. SRY HMG box recognizes DNA by partial intercalation in the minor groove and promotes DNA bending. Also involved in pre-mRNA splicing. In male adult brain involved in the maintenance of motor functions of dopaminergic neurons. Constitutes the major isoform, which is necessary and sufficient for initiating male sex determination. Functionally, constitutes a minor isoform, which is unstable due to the presence of a degron at the C-terminus that promotes its degradation. Not necessary and sufficient for initiating male sex determination. This chain is Sex-determining region Y protein, found in Mus musculus (Mouse).